The following is an 86-amino-acid chain: Chymotrypsin inhibitor (86 aa).

Positions methionine 1 to alanine 22 are cleaved as a signal peptide.

Belongs to the protease inhibitor I13 (potato type I serine protease inhibitor) family. Monomer. In terms of tissue distribution, expressed in the body wall, coelomocytes and at a lower level in intestine.

The protein resides in the secreted. In terms of biological role, inhibits L.terrestris digestive chymotrypsin LT_CH 1 and bovine alpha-chymotrypsin. In Lumbricus terrestris (Common earthworm), this protein is Chymotrypsin inhibitor.